The primary structure comprises 383 residues: Putative glutamate--cysteine ligase 2 (383 aa).

The protein belongs to the glutamate--cysteine ligase type 2 family. YbdK subfamily.

The enzyme catalyses L-cysteine + L-glutamate + ATP = gamma-L-glutamyl-L-cysteine + ADP + phosphate + H(+). ATP-dependent carboxylate-amine ligase which exhibits weak glutamate--cysteine ligase activity. In Clavibacter sepedonicus (Clavibacter michiganensis subsp. sepedonicus), this protein is Putative glutamate--cysteine ligase 2.